The following is a 159-amino-acid chain: Crossover junction endodeoxyribonuclease RuvC (159 aa).

Active-site residues include Asp7, Glu67, and Asp139. Asp7, Glu67, and Asp139 together coordinate Mg(2+).

It belongs to the RuvC family. Homodimer which binds Holliday junction (HJ) DNA. The HJ becomes 2-fold symmetrical on binding to RuvC with unstacked arms; it has a different conformation from HJ DNA in complex with RuvA. In the full resolvosome a probable DNA-RuvA(4)-RuvB(12)-RuvC(2) complex forms which resolves the HJ. Mg(2+) serves as cofactor.

It localises to the cytoplasm. The enzyme catalyses Endonucleolytic cleavage at a junction such as a reciprocal single-stranded crossover between two homologous DNA duplexes (Holliday junction).. The RuvA-RuvB-RuvC complex processes Holliday junction (HJ) DNA during genetic recombination and DNA repair. Endonuclease that resolves HJ intermediates. Cleaves cruciform DNA by making single-stranded nicks across the HJ at symmetrical positions within the homologous arms, yielding a 5'-phosphate and a 3'-hydroxyl group; requires a central core of homology in the junction. The consensus cleavage sequence is 5'-(A/T)TT(C/G)-3'. Cleavage occurs on the 3'-side of the TT dinucleotide at the point of strand exchange. HJ branch migration catalyzed by RuvA-RuvB allows RuvC to scan DNA until it finds its consensus sequence, where it cleaves and resolves the cruciform DNA. The chain is Crossover junction endodeoxyribonuclease RuvC from Orientia tsutsugamushi (strain Boryong) (Rickettsia tsutsugamushi).